The chain runs to 919 residues: Phosphoenolpyruvate carboxylase (919 aa).

Residues H138 and K579 contribute to the active site.

The protein belongs to the PEPCase type 1 family. It depends on Mg(2+) as a cofactor.

The enzyme catalyses oxaloacetate + phosphate = phosphoenolpyruvate + hydrogencarbonate. With respect to regulation, activity not stimulated by acetyl-CoA in the absence of any allosteric inhibitor, while the corresponding protein from E.coli is strongly stimulated. Its function is as follows. Forms oxaloacetate, a four-carbon dicarboxylic acid source for the tricarboxylic acid cycle. The protein is Phosphoenolpyruvate carboxylase (ppc) of Corynebacterium glutamicum (strain ATCC 13032 / DSM 20300 / JCM 1318 / BCRC 11384 / CCUG 27702 / LMG 3730 / NBRC 12168 / NCIMB 10025 / NRRL B-2784 / 534).